Consider the following 79-residue polypeptide: Calcium/calmodulin-dependent protein kinase II inhibitor 2 (79 aa).

Residues 1 to 21 form a disordered region; it reads MSEILPYGEDKMGRFGADPEG. Residues 43 to 69 are inhibitory domain; that stretch reads KRPPKLGQIGRAKRVVIEDDRIDDVLK.

Belongs to the CAMK2N family. As to quaternary structure, interacts with CAMK2A and CAMK2B in the presence of Ca(2+)/calmodulin or after autophosphorylation.

It is found in the nucleus. The protein localises to the cytoplasm. Its subcellular location is the cytosol. The protein resides in the synapse. Functionally, potent and specific cellular inhibitor of CaM-kinase II (CAMK2). Traps Ca(2+)/calmodulin on CAMK2. This Mus musculus (Mouse) protein is Calcium/calmodulin-dependent protein kinase II inhibitor 2 (Camk2n2).